Reading from the N-terminus, the 937-residue chain is AP-2 complex subunit beta (937 aa).

Threonine 2 carries the post-translational modification N-acetylthreonine. The residue at position 4 (serine 4) is a Phosphoserine. The residue at position 265 (lysine 265) is an N6-acetyllysine. Residue tyrosine 737 is modified to Phosphotyrosine; by SRC. Positions 841-937 (WKDIPNENEL…YQVYDSILKN (97 aa)) are interaction with ARRB1. The residue at position 928 (tyrosine 928) is a Phosphotyrosine.

This sequence belongs to the adaptor complexes large subunit family. Adaptor protein complex 2 (AP-2) is a heterotetramer composed of two large adaptins (alpha-type subunit AP2A1 or AP2A2 and beta-type subunit AP2B1), a medium adaptin (mu-type subunit AP2M1) and a small adaptin (sigma-type subunit AP2S1). Interacts with EPN1. Interacts with EPS15; clathrin competes with EPS15. Interacts with SNAP91; clathrin competes with SNAP91. Interacts with CLTC; clathrin competes with EPS15, SNAP91 and PIP5K1C. Interacts with LDLRAP1. Interacts with AMPH and BIN1. Interacts with ARF6 (GDP-bound). Interacts (dephosphorylated at Tyr-737) with ARRB1; phosphorylation of AP2B1 at Tyr-737 disrupts the interaction. Interacts with SLC2A8. Interacts with SCYL1 and SCYL2. Interacts with TGFBR1 and TGFBR2. Interacts with PIP5K1C; clathrin competes with PIP5K1C. Interacts with DENND1B, but not with DENND1A, nor DENND1C. Interacts with FCHO1. Interacts with RFTN1. Interacts with KIAA1107. Together with AP2A1 or AP2A2 and AP2M1, it interacts with ADAM10; this interaction facilitates ADAM10 endocytosis from the plasma membrane during long-term potentiation in hippocampal neurons. Post-translationally, phosphorylation at Tyr-737 by SRC occurs at the plasma membrane in clathrin-coated vesicles (CCVs). Expressed in the brain (at protein level).

The protein localises to the cell membrane. Its subcellular location is the membrane. The protein resides in the coated pit. Functionally, component of the adaptor protein complex 2 (AP-2). Adaptor protein complexes function in protein transport via transport vesicles in different membrane traffic pathways. Adaptor protein complexes are vesicle coat components and appear to be involved in cargo selection and vesicle formation. AP-2 is involved in clathrin-dependent endocytosis in which cargo proteins are incorporated into vesicles surrounded by clathrin (clathrin-coated vesicles, CCVs) which are destined for fusion with the early endosome. The clathrin lattice serves as a mechanical scaffold but is itself unable to bind directly to membrane components. Clathrin-associated adaptor protein (AP) complexes which can bind directly to both the clathrin lattice and to the lipid and protein components of membranes are considered to be the major clathrin adaptors contributing the CCV formation. AP-2 also serves as a cargo receptor to selectively sort the membrane proteins involved in receptor-mediated endocytosis. AP-2 seems to play a role in the recycling of synaptic vesicle membranes from the presynaptic surface. AP-2 recognizes Y-X-X-[FILMV] (Y-X-X-Phi) and [ED]-X-X-X-L-[LI] endocytosis signal motifs within the cytosolic tails of transmembrane cargo molecules. AP-2 may also play a role in maintaining normal post-endocytic trafficking through the ARF6-regulated, non-clathrin pathway. During long-term potentiation in hippocampal neurons, AP-2 is responsible for the endocytosis of ADAM10. The AP-2 beta subunit acts via its C-terminal appendage domain as a scaffolding platform for endocytic accessory proteins; at least some clathrin-associated sorting proteins (CLASPs) are recognized by their [DE]-X(1,2)-F-X-X-[FL]-X-X-X-R motif. The AP-2 beta subunit binds to clathrin heavy chain, promoting clathrin lattice assembly; clathrin displaces at least some CLASPs from AP2B1 which probably then can be positioned for further coat assembly. The protein is AP-2 complex subunit beta (AP2B1) of Homo sapiens (Human).